The primary structure comprises 104 residues: L-rhamnose mutarotase (104 aa).

Substrate is bound at residue Y18. H22 serves as the catalytic Proton donor. Substrate contacts are provided by residues Y41 and W76–W77.

Belongs to the rhamnose mutarotase family. As to quaternary structure, homodimer.

It localises to the cytoplasm. It catalyses the reaction alpha-L-rhamnose = beta-L-rhamnose. Its pathway is carbohydrate metabolism; L-rhamnose metabolism. In terms of biological role, involved in the anomeric conversion of L-rhamnose. This Salmonella newport (strain SL254) protein is L-rhamnose mutarotase.